We begin with the raw amino-acid sequence, 199 residues long: Acireductone dioxygenase 2 (199 aa).

4 residues coordinate Fe(2+): histidine 98, histidine 100, glutamate 104, and histidine 143. Ni(2+)-binding residues include histidine 98, histidine 100, glutamate 104, and histidine 143.

The protein belongs to the acireductone dioxygenase (ARD) family. Requires Fe(2+) as cofactor. Ni(2+) is required as a cofactor.

It localises to the cytoplasm. The protein resides in the nucleus. The catalysed reaction is 1,2-dihydroxy-5-(methylsulfanyl)pent-1-en-3-one + O2 = 4-methylsulfanyl-2-oxobutanoate + formate + 2 H(+). The enzyme catalyses 1,2-dihydroxy-5-(methylsulfanyl)pent-1-en-3-one + O2 = 3-(methylsulfanyl)propanoate + CO + formate + 2 H(+). The protein operates within amino-acid biosynthesis; L-methionine biosynthesis via salvage pathway; L-methionine from S-methyl-5-thio-alpha-D-ribose 1-phosphate: step 5/6. Functionally, catalyzes 2 different reactions between oxygen and the acireductone 1,2-dihydroxy-3-keto-5-methylthiopentene (DHK-MTPene) depending upon the metal bound in the active site. Fe-containing acireductone dioxygenase (Fe-ARD) produces formate and 2-keto-4-methylthiobutyrate (KMTB), the alpha-ketoacid precursor of methionine in the methionine recycle pathway. Ni-containing acireductone dioxygenase (Ni-ARD) produces methylthiopropionate, carbon monoxide and formate, and does not lie on the methionine recycle pathway. This Vitis vinifera (Grape) protein is Acireductone dioxygenase 2.